The primary structure comprises 255 residues: MKIGINSDMGEGFGNYRICDDEALMSIVSSANVACGFHAGDPIIMDRMVRLAKQKGVEVGAHPGLPDLLGFGRRVIQMDAAELEKHMVYQIGALQAIAANAGHRVTHVSFHAAMGNMVNADPDMADVVARAIATINRDFIVFSQPDAEIVRAARKVGLRTLTLFLADRAYDENGHLVSRKLPNSVVTSTEAVAERVKRFLDSGTVQTIEGKSIKVEARSILIHSDTPGSVNLAGTVRRVIEQGGGEVTPATVLLN.

The protein belongs to the LamB/PxpA family. As to quaternary structure, forms a complex composed of PxpA, PxpB and PxpC.

The enzyme catalyses 5-oxo-L-proline + ATP + 2 H2O = L-glutamate + ADP + phosphate + H(+). Catalyzes the cleavage of 5-oxoproline to form L-glutamate coupled to the hydrolysis of ATP to ADP and inorganic phosphate. This Bradyrhizobium diazoefficiens (strain JCM 10833 / BCRC 13528 / IAM 13628 / NBRC 14792 / USDA 110) protein is 5-oxoprolinase subunit A 1.